A 453-amino-acid polypeptide reads, in one-letter code: Flap endonuclease 1 (453 aa).

Positions 1–105 (MGIKGLTGLL…SVLAKRFARR (105 aa)) are N-domain. Residue D34 participates in Mg(2+) binding. Positions 47 and 71 each coordinate DNA. Positions 87, 159, 161, 180, and 182 each coordinate Mg(2+). The tract at residues 123–254 (DVDKLARRQV…KTALKLMREH (132 aa)) is I-domain. Residue E159 coordinates DNA. Positions 232 and 234 each coordinate DNA. D234 lines the Mg(2+) pocket. Disordered regions lie at residues 273–336 (EEIK…VASS) and 409–453 (RLDG…KSKN). Residues 320 to 333 (KSPKKKAPAKKKKV) are compositionally biased toward basic residues. The interval 406–414 (QQGRLDGFF) is interaction with PCNA. The span at 417-446 (KPKEPAAKDTGKGKGKATKGEKRKAEEKGS) shows a compositional bias: basic and acidic residues.

Belongs to the XPG/RAD2 endonuclease family. FEN1 subfamily. In terms of assembly, interacts with PCNA. Three molecules of FEN1 bind to one PCNA trimer with each molecule binding to one PCNA monomer. PCNA stimulates the nuclease activity without altering cleavage specificity. Mg(2+) is required as a cofactor. Post-translationally, phosphorylated. Phosphorylation upon DNA damage induces relocalization to the nuclear plasma.

The protein localises to the nucleus. It localises to the nucleolus. Its subcellular location is the nucleoplasm. The protein resides in the mitochondrion. Its function is as follows. Structure-specific nuclease with 5'-flap endonuclease and 5'-3' exonuclease activities involved in DNA replication and repair. During DNA replication, cleaves the 5'-overhanging flap structure that is generated by displacement synthesis when DNA polymerase encounters the 5'-end of a downstream Okazaki fragment. It enters the flap from the 5'-end and then tracks to cleave the flap base, leaving a nick for ligation. Also involved in the long patch base excision repair (LP-BER) pathway, by cleaving within the apurinic/apyrimidinic (AP) site-terminated flap. Acts as a genome stabilization factor that prevents flaps from equilibrating into structures that lead to duplications and deletions. Also possesses 5'-3' exonuclease activity on nicked or gapped double-stranded DNA, and exhibits RNase H activity. Also involved in replication and repair of rDNA and in repairing mitochondrial DNA. The chain is Flap endonuclease 1 from Cryptococcus neoformans var. neoformans serotype D (strain B-3501A) (Filobasidiella neoformans).